We begin with the raw amino-acid sequence, 211 residues long: Small ribosomal subunit protein bS6c alpha (211 aa).

Residues 1-19 (MATFSLTSTLPSSSPTTSL) show a composition bias toward low complexity. Disordered regions lie at residues 1-25 (MATFSLTSTLPSSSPTTSLHSIPKP) and 80-100 (DEDPPSTPPAGLAVEEKPEPQ). Residues 1–65 (MATFSLTSTL…YGPYVKAIAL (65 aa)) constitute a chloroplast transit peptide.

Belongs to the bacterial ribosomal protein bS6 family. As to quaternary structure, component of the chloroplast small ribosomal subunit (SSU). Mature 70S chloroplast ribosomes of higher plants consist of a small (30S) and a large (50S) subunit. The 30S small subunit contains 1 molecule of ribosomal RNA (16S rRNA) and 24 different proteins. The 50S large subunit contains 3 rRNA molecules (23S, 5S and 4.5S rRNA) and 33 different proteins.

It is found in the plastid. Its subcellular location is the chloroplast. Its function is as follows. Component of the chloroplast ribosome (chloro-ribosome), a dedicated translation machinery responsible for the synthesis of chloroplast genome-encoded proteins, including proteins of the transcription and translation machinery and components of the photosynthetic apparatus. This chain is Small ribosomal subunit protein bS6c alpha (RPS6), found in Spinacia oleracea (Spinach).